A 407-amino-acid chain; its full sequence is Dephospho-CoA kinase (407 aa).

Positions 3–204 (RIGLTGGIGA…QPFAHNLAQR (202 aa)) constitute a DPCK domain. 11–16 (GAGKSL) serves as a coordination point for ATP. The tract at residues 196–407 (PFAHNLAQRQ…EWADAVHWRP (212 aa)) is UPF0157.

It in the N-terminal section; belongs to the CoaE family. In the C-terminal section; belongs to the UPF0157 (GrpB) family.

The protein localises to the cytoplasm. It carries out the reaction 3'-dephospho-CoA + ATP = ADP + CoA + H(+). It functions in the pathway cofactor biosynthesis; coenzyme A biosynthesis; CoA from (R)-pantothenate: step 5/5. Functionally, catalyzes the phosphorylation of the 3'-hydroxyl group of dephosphocoenzyme A to form coenzyme A. The sequence is that of Dephospho-CoA kinase from Mycobacterium bovis (strain ATCC BAA-935 / AF2122/97).